Here is a 274-residue protein sequence, read N- to C-terminus: Large ribosomal subunit protein uL2 (274 aa).

The disordered stretch occupies residues 224-256; it reads AMNPIDHPHGGGEGRTGEGRHAVDPWGNLTKGY. Residues 229-246 show a composition bias toward basic and acidic residues; sequence DHPHGGGEGRTGEGRHAV.

The protein belongs to the universal ribosomal protein uL2 family. As to quaternary structure, part of the 50S ribosomal subunit. Forms a bridge to the 30S subunit in the 70S ribosome.

In terms of biological role, one of the primary rRNA binding proteins. Required for association of the 30S and 50S subunits to form the 70S ribosome, for tRNA binding and peptide bond formation. It has been suggested to have peptidyltransferase activity; this is somewhat controversial. Makes several contacts with the 16S rRNA in the 70S ribosome. This chain is Large ribosomal subunit protein uL2, found in Acidovorax ebreus (strain TPSY) (Diaphorobacter sp. (strain TPSY)).